The sequence spans 201 residues: Holliday junction resolvase RecU (201 aa).

Residues threonine 85, aspartate 87, glutamate 100, and glutamine 119 each contribute to the Mg(2+) site.

The protein belongs to the RecU family. It depends on Mg(2+) as a cofactor.

The protein resides in the cytoplasm. The enzyme catalyses Endonucleolytic cleavage at a junction such as a reciprocal single-stranded crossover between two homologous DNA duplexes (Holliday junction).. Endonuclease that resolves Holliday junction intermediates in genetic recombination. Cleaves mobile four-strand junctions by introducing symmetrical nicks in paired strands. Promotes annealing of linear ssDNA with homologous dsDNA. Required for DNA repair, homologous recombination and chromosome segregation. This Geobacillus sp. (strain WCH70) protein is Holliday junction resolvase RecU.